Reading from the N-terminus, the 1115-residue chain is Receptor-type tyrosine-protein phosphatase H (1115 aa).

The N-terminal stretch at 1–27 (MAGAGGGLGVWGNLVLLGLCSWTGARA) is a signal peptide. The Extracellular portion of the chain corresponds to 28-754 (PAPNPGRNLT…VVCHTESAGV (727 aa)). 8 Fibronectin type-III domains span residues 32–121 (PGRN…APNP), 122–209 (VRNL…TAHN), 210–299 (PVRN…APNP), 300–387 (VRNL…TAPN), 388–477 (PVRN…VPNA), 478–563 (VTSL…TAAT), 564–666 (APNE…TYPD), and 665–749 (PDTV…VCHT). Asn35, Asn83, Asn172, Asn256, Asn285, Asn350, Asn434, Asn468, Asn556, and Asn642 each carry an N-linked (GlcNAc...) asparagine glycan. The chain crosses the membrane as a helical span at residues 755 to 775 (IAGAFVGILLFLILVGLLIFF). At 776 to 1115 (LKRRNKKKQQ…AAIQAHKLEV (340 aa)) the chain is on the cytoplasmic side. One can recognise a Tyrosine-protein phosphatase domain in the interval 820–1079 (FADEYQQLSL…VFLHQCILRF (260 aa)). The Phosphocysteine intermediate role is filled by Cys1020. 2 positions are modified to phosphotyrosine: Tyr1094 and Tyr1102.

This sequence belongs to the protein-tyrosine phosphatase family. Receptor class 3 subfamily. Homodimer; disulfide-linked. Interacts with LCK. Interacts (phosphorylated form) with GRB2 (via SH2 domain). Interacts (phosphorylated form) with FYN (via SH2 domain). Interacts (via extracellular domain) with CEACAM20 (via extracellular domain); the interaction dephosphorylates CEACAM20. Expressed at high levels in the brain, spleen and liver and at lower levels in the heart and stomach. Expressed in pancreatic and colorectal cancer cells, but not in normal pancreas or colon. Expression in hepatocellular carcinoma is related to the differentiation status of the tumor and expression is inversely related to tumor aggressiveness.

It is found in the cell projection. It localises to the microvillus membrane. Its subcellular location is the apical cell membrane. The protein resides in the cytoplasm. The enzyme catalyses O-phospho-L-tyrosyl-[protein] + H2O = L-tyrosyl-[protein] + phosphate. Its activity is regulated as follows. Regulated by reversible dimerization. Dimerization reduces its catalytic activity. Functionally, protein phosphatase that may contribute to contact inhibition of cell growth and motility by mediating the dephosphorylation of focal adhesion-associated substrates and thus negatively regulating integrin-promoted signaling processes. Induces apoptotic cell death by at least two distinct mechanisms: inhibition of cell survival signaling mediated by PI 3-kinase, Akt, and ILK and activation of a caspase-dependent proapoptotic pathway. Inhibits the basal activity of LCK and its activation in response to TCR stimulation and TCR-induced activation of MAP kinase and surface expression of CD69. Inhibits TCR-induced tyrosine phosphorylation of LAT and ZAP70. Inhibits both basal activity of DOK1 and its CD2-induced tyrosine phosphorylation. Induces dephosphorylation of BCAR1, focal adhesion kinase and SRC. Reduces migratory activity of activity of Jurkat cells. Reduces tyrosine phosphorylation of CEACAM20 and thereby contributes to suppress the intestinal immune response CEACAM20. The polypeptide is Receptor-type tyrosine-protein phosphatase H (PTPRH) (Homo sapiens (Human)).